We begin with the raw amino-acid sequence, 136 residues long: Phosphoribosyl-AMP cyclohydrolase (136 aa).

Aspartate 92 serves as a coordination point for Mg(2+). Cysteine 93 is a Zn(2+) binding site. Positions 94 and 96 each coordinate Mg(2+). Residues cysteine 109 and cysteine 116 each coordinate Zn(2+).

The protein belongs to the PRA-CH family. Homodimer. Requires Mg(2+) as cofactor. The cofactor is Zn(2+).

It localises to the cytoplasm. It catalyses the reaction 1-(5-phospho-beta-D-ribosyl)-5'-AMP + H2O = 1-(5-phospho-beta-D-ribosyl)-5-[(5-phospho-beta-D-ribosylamino)methylideneamino]imidazole-4-carboxamide. It functions in the pathway amino-acid biosynthesis; L-histidine biosynthesis; L-histidine from 5-phospho-alpha-D-ribose 1-diphosphate: step 3/9. Reversibly inhibited by EDTA and free zinc ions. Enzyme is inactivated by dialysis against 1,10-phenanthroline, which is a zinc specific chelator. Catalyzes the hydrolysis of the adenine ring of phosphoribosyl-AMP. The polypeptide is Phosphoribosyl-AMP cyclohydrolase (Methanococcus vannielii).